Consider the following 286-residue polypeptide: ATP synthase gamma chain (286 aa).

This sequence belongs to the ATPase gamma chain family. As to quaternary structure, F-type ATPases have 2 components, CF(1) - the catalytic core - and CF(0) - the membrane proton channel. CF(1) has five subunits: alpha(3), beta(3), gamma(1), delta(1), epsilon(1). CF(0) has three main subunits: a, b and c.

The protein resides in the cell inner membrane. Produces ATP from ADP in the presence of a proton gradient across the membrane. The gamma chain is believed to be important in regulating ATPase activity and the flow of protons through the CF(0) complex. The chain is ATP synthase gamma chain from Shewanella putrefaciens (strain CN-32 / ATCC BAA-453).